Reading from the N-terminus, the 298-residue chain is 4-hydroxy-tetrahydrodipicolinate synthase (298 aa).

Threonine 48 contacts pyruvate. The Proton donor/acceptor role is filled by tyrosine 137. The Schiff-base intermediate with substrate role is filled by lysine 166. Isoleucine 207 contributes to the pyruvate binding site.

It belongs to the DapA family. As to quaternary structure, homotetramer; dimer of dimers.

It is found in the cytoplasm. It catalyses the reaction L-aspartate 4-semialdehyde + pyruvate = (2S,4S)-4-hydroxy-2,3,4,5-tetrahydrodipicolinate + H2O + H(+). Its pathway is amino-acid biosynthesis; L-lysine biosynthesis via DAP pathway; (S)-tetrahydrodipicolinate from L-aspartate: step 3/4. Its function is as follows. Catalyzes the condensation of (S)-aspartate-beta-semialdehyde [(S)-ASA] and pyruvate to 4-hydroxy-tetrahydrodipicolinate (HTPA). This chain is 4-hydroxy-tetrahydrodipicolinate synthase, found in Campylobacter lari (strain RM2100 / D67 / ATCC BAA-1060).